A 237-amino-acid chain; its full sequence is tRNA (guanine-N(7)-)-methyltransferase (237 aa).

S-adenosyl-L-methionine-binding residues include E67, E92, D119, and D142. D142 is an active-site residue. Residues K146, D178, and 215–218 (TKFE) contribute to the substrate site.

It belongs to the class I-like SAM-binding methyltransferase superfamily. TrmB family.

The enzyme catalyses guanosine(46) in tRNA + S-adenosyl-L-methionine = N(7)-methylguanosine(46) in tRNA + S-adenosyl-L-homocysteine. It participates in tRNA modification; N(7)-methylguanine-tRNA biosynthesis. In terms of biological role, catalyzes the formation of N(7)-methylguanine at position 46 (m7G46) in tRNA. This is tRNA (guanine-N(7)-)-methyltransferase from Aeromonas hydrophila subsp. hydrophila (strain ATCC 7966 / DSM 30187 / BCRC 13018 / CCUG 14551 / JCM 1027 / KCTC 2358 / NCIMB 9240 / NCTC 8049).